The primary structure comprises 329 residues: Acetyl-coenzyme A carboxylase carboxyl transferase subunit alpha (329 aa).

A CoA carboxyltransferase C-terminal domain is found at 40 to 294 (QLESLAARRR…RAALERHLGE (255 aa)).

This sequence belongs to the AccA family. As to quaternary structure, acetyl-CoA carboxylase is a heterohexamer composed of biotin carboxyl carrier protein (AccB), biotin carboxylase (AccC) and two subunits each of ACCase subunit alpha (AccA) and ACCase subunit beta (AccD).

It localises to the cytoplasm. The enzyme catalyses N(6)-carboxybiotinyl-L-lysyl-[protein] + acetyl-CoA = N(6)-biotinyl-L-lysyl-[protein] + malonyl-CoA. It functions in the pathway lipid metabolism; malonyl-CoA biosynthesis; malonyl-CoA from acetyl-CoA: step 1/1. Functionally, component of the acetyl coenzyme A carboxylase (ACC) complex. First, biotin carboxylase catalyzes the carboxylation of biotin on its carrier protein (BCCP) and then the CO(2) group is transferred by the carboxyltransferase to acetyl-CoA to form malonyl-CoA. This Parasynechococcus marenigrum (strain WH8102) protein is Acetyl-coenzyme A carboxylase carboxyl transferase subunit alpha.